Reading from the N-terminus, the 195-residue chain is FMN-dependent NADH:quinone oxidoreductase (195 aa).

Residues serine 10, 16-18 (SVS), and 88-91 (MYNF) contribute to the FMN site.

It belongs to the azoreductase type 1 family. In terms of assembly, homodimer. It depends on FMN as a cofactor.

It carries out the reaction 2 a quinone + NADH + H(+) = 2 a 1,4-benzosemiquinone + NAD(+). The catalysed reaction is N,N-dimethyl-1,4-phenylenediamine + anthranilate + 2 NAD(+) = 2-(4-dimethylaminophenyl)diazenylbenzoate + 2 NADH + 2 H(+). Functionally, quinone reductase that provides resistance to thiol-specific stress caused by electrophilic quinones. Also exhibits azoreductase activity. Catalyzes the reductive cleavage of the azo bond in aromatic azo compounds to the corresponding amines. This chain is FMN-dependent NADH:quinone oxidoreductase, found in Francisella philomiragia subsp. philomiragia (strain ATCC 25017 / CCUG 19701 / FSC 153 / O#319-036).